Reading from the N-terminus, the 872-residue chain is Homeobox-leucine zipper protein ROC6 (872 aa).

2 disordered regions span residues 28-53 (VHNSRLLPTPPVPKPGGGFAAPGLSL) and 67-130 (NRSL…HRHT). Residues 74–85 (GNGGSGSGGDGD) are compositionally biased toward gly residues. The span at 86–99 (SLGRGREEENDSRS) shows a compositional bias: basic and acidic residues. Positions 119-130 (PRKKKKRYHRHT) are enriched in basic residues. A DNA-binding region (homeobox) is located at residues 122–181 (KKKRYHRHTPQQIQELEAVFKECPHPDEKQRMELSRRLNLESRQVKFWFQNRRTQMKQTQ). A coiled-coil region spans residues 176 to 248 (QMKQTQIERH…LKDELDRVCA (73 aa)). Residues 340 to 583 (GAIDRAVLLE…LQRQCQYLAI (244 aa)) enclose the START domain. The tract at residues 792–818 (HNNGASPSPAEVGSGASPNSAAGGGGG) is disordered.

This sequence belongs to the HD-ZIP homeobox family. Class IV subfamily.

The protein localises to the nucleus. In terms of biological role, probable transcription factor. This chain is Homeobox-leucine zipper protein ROC6 (ROC6), found in Oryza sativa subsp. japonica (Rice).